We begin with the raw amino-acid sequence, 208 residues long: Large ribosomal subunit protein eL13 (208 aa).

This sequence belongs to the eukaryotic ribosomal protein eL13 family.

This is Large ribosomal subunit protein eL13 (RPL13) from Chlamydomonas sp. (strain W80).